The chain runs to 718 residues: MQNFTFFASCAKGIELLLKDELDALGISSSEKLAGVEFEGSFEDAYKVCIYSHLASQVMLKIATQKVTDQQALYDFISSINWLDYFDVNTAFKIIISGKHYDFNNTMFVSQKTKDAIVDQFRRETNERPNIDTDNPDNIIKLHLHKQYVNVFLCLNIESLHKRSYRQFQGQAPLKESLAAAILIKAGWLDELKKEQPILIDPMCGSGTILIEAALMAKNIAPVLLNKEFKLFNSKLHDEDLWNNLLEIAKKAQKPTNAIIQGYDIDNNVLDKADRNIYQAGVEDVVNIKRQDIRDLENELESEGLIVTNPPYGERLYGDQLDELLDIFNGFGDRLSQDFYGWKVAILTSFDESIKEMQLRTTKKNKFYNGAIETVLYQFDINEHARFKHESQLEKNIRLAEASALKSDEHIDFSNKLKKNLKNLKPWLKQSGVECYRLYDADIPTFAVAVDIYGEHVFLQEYRADATIDQNIAKQRFYQAIYQIHKTLDIQYENIHTRVRQRQKGKEQYQKNNDRNNFHVINEFNAKFYVNFDDYLDTGIFLDHRKIRQLVAKASKNKTLLNLFSYTCTASVHAALKGAKTTSVDMSNTYLEWGKNNFELNNLDIKKHNFIQADCISWLKSNSEKFDVIFLDPPTFSNSKRMDDILDIQRDHELLINLAMDSLKKDGVLYFSNNYRRFKMSQEIIAKFNCENIDKVCLSRDFLSNKNIHNCWEIKYKK.

In terms of domain architecture, THUMP spans D44–L155.

It belongs to the methyltransferase superfamily. RlmKL family.

Its subcellular location is the cytoplasm. The catalysed reaction is guanosine(2445) in 23S rRNA + S-adenosyl-L-methionine = N(2)-methylguanosine(2445) in 23S rRNA + S-adenosyl-L-homocysteine + H(+). It catalyses the reaction guanosine(2069) in 23S rRNA + S-adenosyl-L-methionine = N(2)-methylguanosine(2069) in 23S rRNA + S-adenosyl-L-homocysteine + H(+). In terms of biological role, specifically methylates the guanine in position 2445 (m2G2445) and the guanine in position 2069 (m7G2069) of 23S rRNA. The sequence is that of Ribosomal RNA large subunit methyltransferase K/L from Francisella philomiragia subsp. philomiragia (strain ATCC 25017 / CCUG 19701 / FSC 153 / O#319-036).